We begin with the raw amino-acid sequence, 297 residues long: Acetylglutamate kinase (297 aa).

Residues 73–74, Arg95, and Asn188 each bind substrate; that span reads GG.

The protein belongs to the acetylglutamate kinase family. ArgB subfamily.

It is found in the cytoplasm. The catalysed reaction is N-acetyl-L-glutamate + ATP = N-acetyl-L-glutamyl 5-phosphate + ADP. It participates in amino-acid biosynthesis; L-arginine biosynthesis; N(2)-acetyl-L-ornithine from L-glutamate: step 2/4. In terms of biological role, catalyzes the ATP-dependent phosphorylation of N-acetyl-L-glutamate. The chain is Acetylglutamate kinase from Trichormus variabilis (strain ATCC 29413 / PCC 7937) (Anabaena variabilis).